Reading from the N-terminus, the 258-residue chain is Transmembrane O-methyltransferase homolog (258 aa).

S-adenosyl-L-methionine contacts are provided by residues glutamate 104, 106-107, serine 112, glutamate 130, and serine 160; that span reads GT.

This sequence belongs to the class I-like SAM-binding methyltransferase superfamily. Cation-dependent O-methyltransferase family. As to quaternary structure, interacts with LHFPL5, PCDH15, TMC1, TMC2 and TMIE. The interaction of TOMT with TMC1 and TMC2 is required for the transportation of TMC1/2 into the stereocilia of hair cells. Interacts directly with TMC1. As to expression, widely expressed with high levels in outer and inner hair cells of the cochlea and vestibule.

The protein localises to the cytoplasm. Its subcellular location is the endoplasmic reticulum. It carries out the reaction a catechol + S-adenosyl-L-methionine = a guaiacol + S-adenosyl-L-homocysteine + H(+). In terms of biological role, catalyzes the O-methylation, and thereby the inactivation, of catecholamine neurotransmitters and catechol hormones. Required for auditory function. Component of the cochlear hair cell's mechanotransduction (MET) machinery. Involved in the assembly of the asymmetric tip-link MET complex. Required for transportation of TMC1 and TMC2 proteins into the mechanically sensitive stereocilia of the hair cells. The function in MET is independent of the enzymatic activity. The protein is Transmembrane O-methyltransferase homolog of Mus musculus (Mouse).